A 958-amino-acid polypeptide reads, in one-letter code: UPF0182 protein TW644 (958 aa).

Helical transmembrane passes span 14–34 (IAIL…FFLV), 59–79 (IFVV…LCMF), 107–127 (KIVV…FAAS), 166–186 (LFFL…ISVV), 205–225 (VQYA…FWLN), 249–269 (LIPG…LFCI), and 280–300 (IIGV…LPWG).

It belongs to the UPF0182 family.

The protein localises to the cell membrane. The sequence is that of UPF0182 protein TW644 from Tropheryma whipplei (strain TW08/27) (Whipple's bacillus).